The chain runs to 391 residues: Casein kinase II subunit alpha (391 aa).

Residues 36 to 41 form an interaction with beta subunit region; the sequence is QDDYQL. The Protein kinase domain occupies 39 to 324; that stretch reads YQLVRKLGRG…AREAMEHPYF (286 aa). Residues 45-53 and Lys68 each bind ATP; that span reads LGRGKYSEV. The Proton acceptor role is filled by Asp156. Residues Thr344 and Thr360 each carry the phosphothreonine; by CDK1 modification. A phosphoserine; by CDK1 mark is found at Ser362 and Ser370.

It belongs to the protein kinase superfamily. Ser/Thr protein kinase family. CK2 subfamily. As to quaternary structure, heterotetramer composed of two catalytic subunits (alpha chain and/or alpha' chain) and two regulatory subunits (beta chains). The tetramer can exist as a combination of 2 alpha/2 beta, 2 alpha'/2 beta or 1 alpha/1 alpha'/2 beta subunits. Also part of a CK2-SPT16-SSRP1 complex composed of SSRP1, SUPT16H, CSNK2A1, CSNK2A2 and CSNK2B, which forms following UV irradiation. Interacts with RNPS1. Interacts with SNAI1. Interacts with PML. Interacts with CCAR2. Interacts with HIRIP3. Post-translationally, phosphorylated at Thr-344, Thr-360, Ser-362 and Ser-370 by CDK1 in prophase and metaphase and dephosphorylated during anaphase. Phosphorylation does not directly affect casein kinase 2 activity, but may contribute to its regulation by forming binding sites for interacting proteins and/or targeting it to different compartments.

It localises to the nucleus. It catalyses the reaction L-seryl-[protein] + ATP = O-phospho-L-seryl-[protein] + ADP + H(+). The enzyme catalyses L-threonyl-[protein] + ATP = O-phospho-L-threonyl-[protein] + ADP + H(+). Its activity is regulated as follows. Constitutively active protein kinase whose activity is not directly affected by phosphorylation. Seems to be regulated by level of expression and localization. Catalytic subunit of a constitutively active serine/threonine-protein kinase complex that phosphorylates a large number of substrates containing acidic residues C-terminal to the phosphorylated serine or threonine. Regulates numerous cellular processes, such as cell cycle progression, apoptosis and transcription, as well as viral infection. May act as a regulatory node which integrates and coordinates numerous signals leading to an appropriate cellular response. During mitosis, functions as a component of the p53/TP53-dependent spindle assembly checkpoint (SAC) that maintains cyclin-B-CDK1 activity and G2 arrest in response to spindle damage. Also required for p53/TP53-mediated apoptosis, phosphorylating 'Ser-392' of p53/TP53 following UV irradiation. Phosphorylates a number of DNA repair proteins in response to DNA damage, such as MDC1, MRE11, RAD9A, RAD51 and HTATSF1, promoting their recruitment to DNA damage sites. Can also negatively regulate apoptosis. Phosphorylates the caspases CASP9 and CASP2 and the apoptotic regulator NOL3. Phosphorylation protects CASP9 from cleavage and activation by CASP8, and inhibits the dimerization of CASP2 and activation of CASP8. Phosphorylates YY1, protecting YY1 from cleavage by CASP7 during apoptosis. Regulates transcription by direct phosphorylation of RNA polymerases I, II, III and IV. Also phosphorylates and regulates numerous transcription factors including NF-kappa-B, STAT1, CREB1, IRF1, IRF2, ATF1, ATF4, SRF, MAX, JUN, FOS, MYC and MYB. Phosphorylates Hsp90 and its co-chaperones FKBP4 and CDC37, which is essential for chaperone function. Mediates sequential phosphorylation of FNIP1, promoting its gradual interaction with Hsp90, leading to activate both kinase and non-kinase client proteins of Hsp90. Regulates Wnt signaling by phosphorylating CTNNB1 and the transcription factor LEF1. Acts as an ectokinase that phosphorylates several extracellular proteins. Phosphorylates PML at 'Ser-565' and primes it for ubiquitin-mediated degradation. Plays an important role in the circadian clock function by phosphorylating BMAL1 at 'Ser-90' which is pivotal for its interaction with CLOCK and which controls CLOCK nuclear entry. Phosphorylates FMR1, promoting FMR1-dependent formation of a membraneless compartment. May phosphorylate histone H2A on 'Ser-1'. The polypeptide is Casein kinase II subunit alpha (Csnk2a1) (Rattus norvegicus (Rat)).